A 228-amino-acid chain; its full sequence is 2-hydroxy-3-keto-5-methylthiopentenyl-1-phosphate phosphatase (228 aa).

The protein belongs to the HAD-like hydrolase superfamily. MtnX family.

It carries out the reaction 2-hydroxy-5-methylsulfanyl-3-oxopent-1-enyl phosphate + H2O = 1,2-dihydroxy-5-(methylsulfanyl)pent-1-en-3-one + phosphate. The protein operates within amino-acid biosynthesis; L-methionine biosynthesis via salvage pathway; L-methionine from S-methyl-5-thio-alpha-D-ribose 1-phosphate: step 4/6. Its function is as follows. Dephosphorylates 2-hydroxy-3-keto-5-methylthiopentenyl-1-phosphate (HK-MTPenyl-1-P) yielding 1,2-dihydroxy-3-keto-5-methylthiopentene (DHK-MTPene). This is 2-hydroxy-3-keto-5-methylthiopentenyl-1-phosphate phosphatase from Lysinibacillus sphaericus (strain C3-41).